Consider the following 442-residue polypeptide: Trigger factor (442 aa).

Positions 165–250 (DDRVIIDFEG…LQKVMAPELP (86 aa)) constitute a PPIase FKBP-type domain.

Belongs to the FKBP-type PPIase family. Tig subfamily.

The protein localises to the cytoplasm. The enzyme catalyses [protein]-peptidylproline (omega=180) = [protein]-peptidylproline (omega=0). Involved in protein export. Acts as a chaperone by maintaining the newly synthesized protein in an open conformation. Functions as a peptidyl-prolyl cis-trans isomerase. In Coxiella burnetii (strain RSA 493 / Nine Mile phase I), this protein is Trigger factor.